A 280-amino-acid chain; its full sequence is Formamidopyrimidine-DNA glycosylase (280 aa).

The active-site Schiff-base intermediate with DNA is proline 2. Glutamate 3 acts as the Proton donor in catalysis. Lysine 58 acts as the Proton donor; for beta-elimination activity in catalysis. Residues histidine 91, arginine 110, and arginine 152 each coordinate DNA. The FPG-type zinc-finger motif lies at 237 to 271 (NVYGRENLPCPQCDSAIEKVVLNQRAAYFCSNCQK). The active-site Proton donor; for delta-elimination activity is the arginine 261.

This sequence belongs to the FPG family. In terms of assembly, monomer. Zn(2+) serves as cofactor.

The enzyme catalyses Hydrolysis of DNA containing ring-opened 7-methylguanine residues, releasing 2,6-diamino-4-hydroxy-5-(N-methyl)formamidopyrimidine.. It carries out the reaction 2'-deoxyribonucleotide-(2'-deoxyribose 5'-phosphate)-2'-deoxyribonucleotide-DNA = a 3'-end 2'-deoxyribonucleotide-(2,3-dehydro-2,3-deoxyribose 5'-phosphate)-DNA + a 5'-end 5'-phospho-2'-deoxyribonucleoside-DNA + H(+). In terms of biological role, involved in base excision repair of DNA damaged by oxidation or by mutagenic agents. Acts as a DNA glycosylase that recognizes and removes damaged bases. Has a preference for oxidized purines, such as 7,8-dihydro-8-oxoguanine (8-oxoG). Has AP (apurinic/apyrimidinic) lyase activity and introduces nicks in the DNA strand. Cleaves the DNA backbone by beta-delta elimination to generate a single-strand break at the site of the removed base with both 3'- and 5'-phosphates. The chain is Formamidopyrimidine-DNA glycosylase from Hydrogenovibrio crunogenus (strain DSM 25203 / XCL-2) (Thiomicrospira crunogena).